The primary structure comprises 659 residues: A-type ATP synthase subunit I (659 aa).

Transmembrane regions (helical) follow at residues 376-396 (FFFG…VISA), 415-435 (IMLW…SYCG), 460-480 (VMAL…GFIV), 489-509 (AAIL…LFAL), 513-533 (LGIP…LFVV), 542-562 (MAVL…LSYA), 566-586 (ALAL…NMVW), and 590-610 (IGPI…GHIF).

It belongs to the V-ATPase 116 kDa subunit family. In terms of assembly, has multiple subunits with at least A(3), B(3), C, D, E, F, H, I and proteolipid K(x).

The protein resides in the cell membrane. Functionally, component of the A-type ATP synthase that produces ATP from ADP in the presence of a proton gradient across the membrane. In Pyrococcus abyssi (strain GE5 / Orsay), this protein is A-type ATP synthase subunit I.